The following is a 268-amino-acid chain: Receptor expression-enhancing protein 2 (268 aa).

Helical transmembrane passes span 1–21 (MVSW…YPAY) and 35–55 (YVKW…ETIT). The interval 170-268 (GDDTHTAATL…TTANNVAESP (99 aa)) is disordered. Over residues 180-196 (PRAKTATRTVRATPVPA) the composition is skewed to low complexity. Over residues 199–216 (ESQHSSRSDDQSDSRTEH) the composition is skewed to basic and acidic residues. A compositionally biased stretch (low complexity) spans 228–248 (RIAITRAAKKPAAAKTEQTTK). Positions 249 to 258 (TVKKAPKKKP) are enriched in basic residues.

It belongs to the DP1 family. Interacts with odorant receptor proteins.

It localises to the membrane. In terms of biological role, may enhance the cell surface expression of odorant receptors. This is Receptor expression-enhancing protein 2 (reep2) from Danio rerio (Zebrafish).